Here is a 632-residue protein sequence, read N- to C-terminus: MLSQNIIDKIIRQDILVDELLDEELSIFCQTANLAYRSGKPIISNEDYDFIYLATLKNKEPNNPLFKSIEPEGRAFAEEKVLLPELMLSIDKAYSWNEMSKWIERLEKSGMLIGLDLNAIQIKATPKLDGFAGFDDGNRLYTRGDGKKGSDISRVFKRGLCVFKDSGRGLGAGEIVVKKSYFEKYLVHSFEYPRNFQSSLIKEKALDEQAQKAIIDKGALFVPFIKLPIWSGSMTELVAKFEEIVSQVLVMVDFDVDGVVFEVINIDLKTQMGANRKFHRWQIAFKENKDIVQVKVLNVMPQVGRSGKITPVAEVEPTLLSGATIVRVTGHHYGLVKEQGLGIGSVVELTRSGLVIPKIISVLKPMPVDIPDNCLSCGMPLVWESDFLVCVNHKNCPAQIIGRITYFFKVLANNDGFGIATVEKLYAHNIRSVSQIYTLNVERLMAIGFGEKTSINLISQLSRSISEKIEDWRFLAAFGMHRMGLGNCENLLKSYRLNDIFDLTLEQITNIDGFAELTAQVIVQGLVSIVDEYNQIYQYNFNLDTTVFTKDLQTLMHELFDKRIVFTGKMNCPRNEMKKHAKLVGIKVSTTISTKIDYLVIGSRVGQKKIQNAEKLGVVVMTEADYLSKITM.

NAD(+)-binding positions include 45-49 (NEDYD) and 89-90 (SI). Lys-127 acts as the N6-AMP-lysine intermediate in catalysis. Residues Arg-143, Glu-174, and Lys-286 each contribute to the NAD(+) site. Residues Cys-374, Cys-377, Cys-390, and Cys-396 each coordinate Zn(2+). One can recognise a BRCT domain in the interval 561–632 (DKRIVFTGKM…EADYLSKITM (72 aa)).

It belongs to the NAD-dependent DNA ligase family. LigA subfamily. It depends on Mg(2+) as a cofactor. The cofactor is Mn(2+).

It catalyses the reaction NAD(+) + (deoxyribonucleotide)n-3'-hydroxyl + 5'-phospho-(deoxyribonucleotide)m = (deoxyribonucleotide)n+m + AMP + beta-nicotinamide D-nucleotide.. In terms of biological role, DNA ligase that catalyzes the formation of phosphodiester linkages between 5'-phosphoryl and 3'-hydroxyl groups in double-stranded DNA using NAD as a coenzyme and as the energy source for the reaction. It is essential for DNA replication and repair of damaged DNA. In Vesicomyosocius okutanii subsp. Calyptogena okutanii (strain HA), this protein is DNA ligase.